We begin with the raw amino-acid sequence, 614 residues long: MRPLRPWALLLGALLGAAAAAARRYPHVAVLDGAAAYRLLWGRRGSALAFRLEVRTRGYVGFGLSAGGGMASADIVVGGVEGGRPYLQDYHTDENRVLKKDPQQDYHLEYAMENSTHTILAFSRELYTCDPNDKSITESTVRVIWAYHHKDLGEAGQNYHGSTRGTKSLRLLNPEKAEVSPASLSYFDLTNKDVPVPDKDTTYWCQMFKIPVQHEKHHVTKVEPLIQKDHENLVHHILLYQCSSNLNDSVLDYGHECYHPNMPDSFFTCETVIFAWAIGGEGFTYPPHVGLSIGTAADPQFVLMEVHYDNPTYTEGLIDNSGLRLFYTPVLRKYDAGVIEAGLWVSLFHNIPPGMPEFVSEGHCTLECLEEALGAERPSGIHVFAVLLHAHLAGRAIRMRHFRNGEEQKLLAYDEEFDFNFQEFQYLEEERTIMPGDNLITECHYSTTDRIRMTWGGLSTRNEMCLSYLLYYPRINLTRCASIPDIMEQLQFIGVKEIYRPVRTWPFIIKSPKQYKNLSFMDAMNKFKWSKSEGLSYNELVLKLPMNVRCSKTDNAEWSFQGMTAFPPEVERPYKTEPVICSSSSCLPCSLSLTLLFVVYVASSTIGNFGPVVQ.

An N-terminal signal peptide occupies residues 1-22 (MRPLRPWALLLGALLGAAAAAA). The Lumenal portion of the chain corresponds to 23–592 (RRYPHVAVLD…SSSCLPCSLS (570 aa)). The 114-residue stretch at 35-148 (AAYRLLWGRR…STVRVIWAYH (114 aa)) folds into the DOMON domain. Asparagine 114 is a glycosylation site (N-linked (GlcNAc...) asparagine). Residue tyrosine 203 is part of the active site. 2 cysteine pairs are disulfide-bonded: cysteine 205-cysteine 257 and cysteine 242-cysteine 269. Cu cation contacts are provided by histidine 235 and histidine 236. Asparagine 247 carries N-linked (GlcNAc...) asparagine glycosylation. Cu cation is bound by residues histidine 307, histidine 389, histidine 391, and methionine 464. Disulfide bonds link cysteine 364-cysteine 480, cysteine 368-cysteine 550, and cysteine 443-cysteine 465. Histidine 389 is an active-site residue. N-linked (GlcNAc...) asparagine glycans are attached at residues asparagine 476 and asparagine 517. The chain crosses the membrane as a helical span at residues 593-613 (LTLLFVVYVASSTIGNFGPVV).

It belongs to the copper type II ascorbate-dependent monooxygenase family. Requires Cu(2+) as cofactor.

The protein resides in the endoplasmic reticulum membrane. The protein is DBH-like monooxygenase protein 1 (MOXD1) of Gallus gallus (Chicken).